The chain runs to 125 residues: Large ribosomal subunit protein bL12 (125 aa).

It belongs to the bacterial ribosomal protein bL12 family. As to quaternary structure, homodimer. Part of the ribosomal stalk of the 50S ribosomal subunit. Forms a multimeric L10(L12)X complex, where L10 forms an elongated spine to which 2 to 4 L12 dimers bind in a sequential fashion. Binds GTP-bound translation factors.

Its function is as follows. Forms part of the ribosomal stalk which helps the ribosome interact with GTP-bound translation factors. Is thus essential for accurate translation. In Mesorhizobium japonicum (strain LMG 29417 / CECT 9101 / MAFF 303099) (Mesorhizobium loti (strain MAFF 303099)), this protein is Large ribosomal subunit protein bL12.